A 76-amino-acid polypeptide reads, in one-letter code: Histone H2A (76 aa).

The tract at residues 1–23 (MSGRGKTGGKARAKAKTRSSRAG) is disordered. S2 carries the post-translational modification N-acetylserine; in acipensins. S2 is subject to N-acetylserine; in histone H2A. At S2 the chain carries Phosphoserine; in histone H2A. K6 bears the N6-(2-hydroxyisobutyryl)lysine mark. K6 carries the N6-acetyllysine; in histone H2A modification. Basic residues predominate over residues 7 to 19 (TGGKARAKAKTRS). An N6-(2-hydroxyisobutyryl)lysine; alternate modification is found at K10. K10 carries the post-translational modification N6-lactoyllysine; alternate. N6-succinyllysine is present on K10. Glycyl lysine isopeptide (Lys-Gly) (interchain with G-Cter in ubiquitin); in histone H2A cross-links involve residues K14 and K16. N6-(2-hydroxyisobutyryl)lysine; alternate is present on K37. K65 and K66 each carry N6-(2-hydroxyisobutyryl)lysine.

It belongs to the histone H2A family. As to quaternary structure, the nucleosome is a histone octamer containing two molecules each of H2A, H2B, H3 and H4 assembled in one H3-H4 heterotetramer and two H2A-H2B heterodimers. The octamer wraps approximately 147 bp of DNA. Post-translationally, phosphorylation on Ser-2 is enhanced during mitosis. Phosphorylation on Ser-2 directly represses transcription.

The protein localises to the nucleus. Its subcellular location is the chromosome. Core component of nucleosome. Nucleosomes wrap and compact DNA into chromatin, limiting DNA accessibility to the cellular machineries which require DNA as a template. Histones thereby play a central role in transcription regulation, DNA repair, DNA replication and chromosomal stability. DNA accessibility is regulated via a complex set of post-translational modifications of histones, also called histone code, and nucleosome remodeling. Its function is as follows. Acipensins are antimicrobial peptides. Acipensins 1 and 2 have antibacterial activity against Gram-positive bacteria L.monocytogenes EGD (MIC are 1.1 uM and 1.0 uM, respectively) and S.aureus ATCC 33591 (MIC are 0.9 uM and 0.6 uM, respectively), against Gram-negative bacterium E.coli ML-35p (MIC are 0.7 uM and 0.3 uM, respectively) and antifungal activity against C.albicans 820 (MIC are 1.0 uM and 0.9 uM, respectively). Acipensin 6 has antibacterial activity against Gram-negative bacterium E.coli ML-35p (MIC=2.5 uM). Antimicrobial activity is reduced by high ionic strength. Acipensins 1, 2 and 6 have no hemolytic (up to 40 uM) or cytotoxic (up to 20 uM) effects on human cells in vitro. This is Histone H2A from Acipenser gueldenstaedtii (Russian sturgeon).